The following is a 407-amino-acid chain: Peptidase T (407 aa).

H82 contacts Zn(2+). D84 is an active-site residue. Position 143 (D143) interacts with Zn(2+). Catalysis depends on E177, which acts as the Proton acceptor. Residues E178, D200, and H382 each coordinate Zn(2+).

Belongs to the peptidase M20B family. Zn(2+) serves as cofactor.

Its subcellular location is the cytoplasm. It carries out the reaction Release of the N-terminal residue from a tripeptide.. Its function is as follows. Cleaves the N-terminal amino acid of tripeptides. The polypeptide is Peptidase T (Streptococcus equi subsp. equi (strain 4047)).